Consider the following 1141-residue polypeptide: DNA polymerase 120R (1141 aa).

It belongs to the DNA polymerase type-B family.

The enzyme catalyses DNA(n) + a 2'-deoxyribonucleoside 5'-triphosphate = DNA(n+1) + diphosphate. DNA-directed DNA polymerase involved in viral DNA replication. The sequence is that of DNA polymerase 120R from Invertebrate iridescent virus 3 (IIV-3).